Reading from the N-terminus, the 472-residue chain is Hepatocyte nuclear factor 3-alpha (472 aa).

The segment at residues Ala169 to Leu260 is a DNA-binding region (fork-head). Residues Glu269–Pro392 form a disordered region. The span at Gly273 to Gly289 shows a compositional bias: gly residues. Ser307 and Ser331 each carry phosphoserine. Composition is skewed to low complexity over residues Gly322–Pro332 and Thr351–Ala366.

In terms of assembly, binds DNA as a monomer. Interacts with FOXA2. Interacts with NKX2-1. Interacts with HDAC7. Interacts with the histone H3-H4 heterodimer. Associates with nucleosomes containing histone H2A. Interacts with AR. Interacts with NR0B2. Highly expressed in prostate and ESR1-positive breast tumors. Overexpressed in esophageal and lung adenocarcinomas.

It localises to the nucleus. Functionally, transcription factor that is involved in embryonic development, establishment of tissue-specific gene expression and regulation of gene expression in differentiated tissues. Is thought to act as a 'pioneer' factor opening the compacted chromatin for other proteins through interactions with nucleosomal core histones and thereby replacing linker histones at target enhancer and/or promoter sites. Binds DNA with the consensus sequence 5'-[AC]A[AT]T[AG]TT[GT][AG][CT]T[CT]-3'. Proposed to play a role in translating the epigenetic signatures into cell type-specific enhancer-driven transcriptional programs. Its differential recruitment to chromatin is dependent on distribution of histone H3 methylated at 'Lys-5' (H3K4me2) in estrogen-regulated genes. Involved in the development of multiple endoderm-derived organ systems such as liver, pancreas, lung and prostate; FOXA1 and FOXA2 seem to have at least in part redundant roles. Modulates the transcriptional activity of nuclear hormone receptors. Is involved in ESR1-mediated transcription; required for ESR1 binding to the NKX2-1 promoter in breast cancer cells; binds to the RPRM promoter and is required for the estrogen-induced repression of RPRM. Involved in regulation of apoptosis by inhibiting the expression of BCL2. Involved in cell cycle regulation by activating expression of CDKN1B, alone or in conjunction with BRCA1. Originally described as a transcription activator for a number of liver genes such as AFP, albumin, tyrosine aminotransferase, PEPCK, etc. Interacts with the cis-acting regulatory regions of these genes. Involved in glucose homeostasis. The protein is Hepatocyte nuclear factor 3-alpha (FOXA1) of Homo sapiens (Human).